Consider the following 1075-residue polypeptide: Nuclear factor of activated T-cells, cytoplasmic 3 (1075 aa).

Position 2 is an N-acetylthreonine (Thr2). A disordered region spans residues 18–37 (FGEDGAPAPPPPGSRPADLE). A calcineurin-binding region spans residues 109 to 114 (PSIQIT). The tract at residues 205-306 (LGSPLTSPGG…PGHSPRGSVT (102 aa)) is disordered. Repeat copies occupy residues 207–223 (SPLT…PGEE) and 236–252 (SPRQ…VTDE). A 3 X SP repeats region spans residues 207-308 (SPLTSPGGSP…HSPRGSVTED (102 aa)). Over residues 236–253 (SPRQSPCHSPRSSVTDEN) the composition is skewed to polar residues. Over residues 256–270 (SPRPASGPSSRPTSP) the composition is skewed to low complexity. The short motif at 273–275 (KRR) is the Nuclear localization signal element. Residues 292–308 (SPVPSPGHSPRGSVTED) form repeat 3. 2 positions are modified to phosphoserine: Ser344 and Ser372. An RHD domain is found at 415–596 (SSLPPLDWPL…IPVECSQRSA (182 aa)). The DNA-binding element occupies 444–451 (RAHYETEG). A Nuclear localization signal motif is present at residues 686-688 (KRK). 2 disordered regions span residues 711–739 (DLSS…SHDS) and 887–988 (SNTG…GLSA). 2 stretches are compositionally biased toward polar residues: residues 724-739 (AQTQ…SHDS) and 887-912 (SNTG…QLQP). Composition is skewed to low complexity over residues 916–939 (GPSH…SSPL) and 949–967 (PMPY…SPAT). Residues 970–981 (HSGQHSTQAQST) show a composition bias toward polar residues. Residues 1032-1041 (TLDDVNEIIG) carry the Nuclear export signal motif. Residues 1049 to 1075 (VSQGAGVSRQAPLPSPESLDLGRSDGL) are disordered. A phosphoserine mark is found at Ser1063 and Ser1066.

As to quaternary structure, NFATC proteins bind to DNA as monomers. Member of the multicomponent NFATC transcription complex that consists of at least two components, a pre-existing cytoplasmic component NFATC2 and an inducible nuclear component NFATC1. Other members such as NFATC4, or members of the activating protein-1 family, MAF, GATA4 and Cbp/p300 can also bind the complex. Component of a promoter-binding complex composed of STAT3, NFATC3 and NFATC4; complex formation is enhanced by calcineurin. Interacts with TRIM17; this interaction prevents NFATC3 nuclear localization. Interacts with and ubiquitinated by STUB1/CHIP; HSPA1A/HSP70 is required as a co-chaperone. Post-translationally, ubiquitinated by STUB1/CHIP, leading to proteasomal degradation. Phosphorylated by NFATC-kinase; dephosphorylated by calcineurin. Predominantly expressed in thymus and is also found in peripheral blood leukocytes and kidney. As to expression, predominantly expressed in skeletal muscle. Also found weakly expressed in the thymus, kidney, testis, spleen, prostate, ovary, small intestine, heart, placenta and pancreas. In terms of tissue distribution, expressed in thymus and kidney. Expressed in thymus and skeletal muscle.

It is found in the cytoplasm. It localises to the nucleus. Its function is as follows. Acts as a regulator of transcriptional activation. Binds to the TNFSF11/RANKL promoter region and promotes TNFSF11 transcription. Binding to the TNFSF11 promoter region is increased by high levels of Ca(2+) which induce NFATC3 expression and may lead to regulation of TNFSF11 expression in osteoblasts. Plays a role in promoting mesenteric arterial wall remodeling in response to the intermittent hypoxia-induced increase in EDN1 and ROCK signaling. As a result NFATC3 colocalizes with F-actin filaments, translocates to the nucleus and promotes transcription of the smooth muscle hypertrophy and differentiation marker ACTA2. Promotes lipopolysaccharide-induced apoptosis and hypertrophy in cardiomyocytes. Following JAK/STAT signaling activation and as part of a complex with NFATC4 and STAT3, binds to the alpha-beta E4 promoter region of CRYAB and activates transcription in cardiomyocytes. In conjunction with NFATC4, involved in embryonic heart development via maintenance of cardiomyocyte survival, proliferation and differentiation. Plays a role in the inducible expression of cytokine genes in T-cells, especially in the induction of the IL-2. Required for thymocyte maturation during DN3 to DN4 transition and during positive selection. Positively regulates macrophage-derived polymicrobial clearance, via binding to the promoter region and promoting transcription of NOS2 resulting in subsequent generation of nitric oxide. Involved in Ca(2+)-mediated transcriptional responses upon Ca(2+) influx via ORAI1 CRAC channels. The protein is Nuclear factor of activated T-cells, cytoplasmic 3 of Homo sapiens (Human).